A 596-amino-acid polypeptide reads, in one-letter code: Elongation factor 4 (596 aa).

In terms of domain architecture, tr-type G spans 2–184; sequence KNIRNFAIIA…SIVKYIPPPE (183 aa). GTP-binding positions include 14-19 and 131-134; these read DHGKST and NKID.

The protein belongs to the TRAFAC class translation factor GTPase superfamily. Classic translation factor GTPase family. LepA subfamily.

The protein localises to the cell inner membrane. The enzyme catalyses GTP + H2O = GDP + phosphate + H(+). In terms of biological role, required for accurate and efficient protein synthesis under certain stress conditions. May act as a fidelity factor of the translation reaction, by catalyzing a one-codon backward translocation of tRNAs on improperly translocated ribosomes. Back-translocation proceeds from a post-translocation (POST) complex to a pre-translocation (PRE) complex, thus giving elongation factor G a second chance to translocate the tRNAs correctly. Binds to ribosomes in a GTP-dependent manner. The sequence is that of Elongation factor 4 from Neorickettsia sennetsu (strain ATCC VR-367 / Miyayama) (Ehrlichia sennetsu).